We begin with the raw amino-acid sequence, 383 residues long: Glucose-1-phosphate adenylyltransferase (383 aa).

Residues Tyr-99, Gly-164, 179–180 (EK), and Ser-190 each bind alpha-D-glucose 1-phosphate.

The protein belongs to the bacterial/plant glucose-1-phosphate adenylyltransferase family. Homotetramer.

It carries out the reaction alpha-D-glucose 1-phosphate + ATP + H(+) = ADP-alpha-D-glucose + diphosphate. Its pathway is glycan biosynthesis; glycogen biosynthesis. Its function is as follows. Involved in the biosynthesis of ADP-glucose, a building block required for the elongation reactions to produce glycogen. Catalyzes the reaction between ATP and alpha-D-glucose 1-phosphate (G1P) to produce pyrophosphate and ADP-Glc. The polypeptide is Glucose-1-phosphate adenylyltransferase (Halalkalibacterium halodurans (strain ATCC BAA-125 / DSM 18197 / FERM 7344 / JCM 9153 / C-125) (Bacillus halodurans)).